A 322-amino-acid polypeptide reads, in one-letter code: Sideroflexin-2 (322 aa).

At Met-1 the chain carries N-acetylmethionine. 5 helical membrane passes run 100 to 122 (MIITGFMLQFYRTMPAVIFWQWV), 142 to 164 (SVRQMAVSYITATTTAVATAVGM), 174 to 192 (LVGRWVPFAAVAAANCVNI), 228 to 250 (VVISRITMAAPGMILLPVLMERL), and 265 to 287 (PLQVLLSGCFLIFMVPVACGLFP).

Belongs to the sideroflexin family.

It is found in the mitochondrion inner membrane. The protein localises to the mitochondrion outer membrane. The enzyme catalyses L-serine(in) = L-serine(out). In terms of biological role, mitochondrial amino-acid transporter that mediates transport of serine into mitochondria. Involved in mitochondrial iron homeostasis by regulating heme biosynthesis. The polypeptide is Sideroflexin-2 (Bos taurus (Bovine)).